The primary structure comprises 381 residues: Guanine nucleotide-binding protein subunit alpha-12 (381 aa).

Cys-11 carries the S-palmitoyl cysteine lipid modification. The G-alpha domain maps to 56–381 (RLVKILLLGA…QENLKDIMLQ (326 aa)). The interval 59–72 (KILLLGAGESGKST) is G1 motif. Residues 67-72 (ESGKST) and 202-205 (LLAR) contribute to the GTP site. Residue Ser-71 coordinates Mg(2+). Positions 200–208 (DILLARKAT) are G2 motif. Thr-208 lines the Mg(2+) pocket. A Phosphothreonine modification is found at Thr-208. The interval 223–232 (FKMVDVGGQR) is G3 motif. The G4 motif stretch occupies residues 292 to 299 (ILFLNKMD). GTP contacts are provided by residues 296 to 299 (NKMD) and Ala-353. The segment at 351 to 356 (TTAIDT) is G5 motif.

It belongs to the G-alpha family. G(12) subfamily. In terms of assembly, g proteins are composed of 3 units; alpha, beta and gamma. The alpha chain contains the guanine nucleotide binding site. Interacts with UBXD5. Interacts (in GTP-bound form) with PPP5C (via TPR repeats); activates PPP5C phosphatase activity and translocates PPP5C to the cell membrane. Interacts with RGS22. Interacts (via N-terminus) with NAPA; the interaction promotes CDH5 localization to plasma membrane. Interacts with CTNND1 (via N-terminus); the interaction regulates CDH1-mediated cell-cell adhesion. Interacts with PPP2R1A; the interaction promotes protein phosphatase 2A activation causing dephosphorylation of MAPT. Interacts (in GTP-bound form) with ARHGEF1. Interacts (in GTP-bound form) with ARHGEF11 (via RGS domain). Interacts (in GTP-bound form) with ARHGEF12 (via RGS domain).

It is found in the cell membrane. It localises to the lateral cell membrane. Its subcellular location is the cytoplasm. Its function is as follows. Guanine nucleotide-binding proteins (G proteins) are involved as modulators or transducers in various transmembrane signaling systems. Activates effector molecule RhoA by binding and activating RhoGEFs (ARHGEF12/LARG). GNA12-dependent Rho signaling subsequently regulates transcription factor AP-1 (activating protein-1). GNA12-dependent Rho signaling also regulates protein phosphatese 2A activation causing dephosphorylation of its target proteins. Promotes tumor cell invasion and metastasis by activating RhoA/ROCK signaling pathway and up-regulating pro-inflammatory cytokine production. Inhibits CDH1-mediated cell adhesion in process independent from Rho activation. Together with NAPA promotes CDH5 localization to plasma membrane. May play a role in the control of cell migration through the TOR signaling cascade. This is Guanine nucleotide-binding protein subunit alpha-12 (GNA12) from Homo sapiens (Human).